We begin with the raw amino-acid sequence, 566 residues long: Rho GTPase-activating protein gacH (566 aa).

Disordered regions lie at residues 1–56, 65–84, 128–168, and 322–366; these read MSGV…SGAT, LLKQQQQPNHSITTNNNNNK, SEDE…SAHS, and KPQV…NSKN. Positions 14–35 are enriched in low complexity; that stretch reads SSTTATTTGSSKSSLNISKSVS. A compositionally biased stretch (polar residues) spans 36–56; sequence PTGNKAVSPMSSPNSLQSGAT. The span at 65-83 shows a compositional bias: low complexity; sequence LLKQQQQPNHSITTNNNNN. The segment covering 130-141 has biased composition (acidic residues); that stretch reads DEYEDDEDEDEN. The span at 142–160 shows a compositional bias: low complexity; that stretch reads NNSVNNNSNNNSNNNNNNN. Residues 327–337 show a composition bias toward polar residues; the sequence is KSPQSSGSLST. Residues 345–356 show a composition bias toward low complexity; it reads SSSLQRSRSVSQ. Residues 369–564 enclose the Rho-GAP domain; the sequence is GSLDTILEKE…LLIENYNLFY (196 aa).

The protein resides in the cytoplasm. Functionally, rho GTPase-activating protein involved in the signal transduction pathway. This Dictyostelium discoideum (Social amoeba) protein is Rho GTPase-activating protein gacH (gacH).